Reading from the N-terminus, the 223-residue chain is N-terminal Xaa-Pro-Lys N-methyltransferase 1 (223 aa).

Position 1 is an N-acetylmethionine (Met-1). Residue Thr-2 is modified to N-acetylthreonine; in N-terminal Xaa-Pro-Lys N-methyltransferase 1, N-terminally processed. Residues Gly-69, Arg-74, 91-93, 119-120, and Gln-135 each bind S-adenosyl-L-methionine; these read DIT and LQ.

The protein belongs to the methyltransferase superfamily. NTM1 family.

It localises to the nucleus. It carries out the reaction N-terminal L-alanyl-L-prolyl-L-lysyl-[protein] + 3 S-adenosyl-L-methionine = N-terminal N,N,N-trimethyl-L-alanyl-L-prolyl-L-lysyl-[protein] + 3 S-adenosyl-L-homocysteine + 3 H(+). It catalyses the reaction N-terminal L-seryl-L-prolyl-L-lysyl-[protein] + 3 S-adenosyl-L-methionine = N-terminal N,N,N-trimethyl-L-seryl-L-prolyl-L-lysyl-[protein] + 3 S-adenosyl-L-homocysteine + 3 H(+). The catalysed reaction is N-terminal L-prolyl-L-prolyl-L-lysyl-[protein] + 2 S-adenosyl-L-methionine = N-terminal N,N-dimethyl-L-prolyl-L-prolyl-L-lysyl-[protein] + 2 S-adenosyl-L-homocysteine + 2 H(+). Its function is as follows. Distributive alpha-N-methyltransferase that methylates the N-terminus of target proteins containing the N-terminal motif [Ala/Gly/Pro/Ser]-Pro-Lys when the initiator Met is cleaved. Specifically catalyzes mono-, di- or tri-methylation of the exposed alpha-amino group of the Ala, Gly or Ser residue in the [Ala/Gly/Ser]-Pro-Lys motif and mono- or di-methylation of Pro in the Pro-Pro-Lys motif. Some of the substrates may be primed by NTMT2-mediated monomethylation. Catalyzes the trimethylation of the N-terminal Gly in CENPA (after removal of Met-1). Responsible for the N-terminal methylation of KLHL31, MYL2, MYL3, RB1, RCC1, RPL23A and SET. Required during mitosis for normal bipolar spindle formation and chromosome segregation via its action on RCC1. This is N-terminal Xaa-Pro-Lys N-methyltransferase 1 (NTMT1) from Homo sapiens (Human).